The sequence spans 439 residues: Telomeric repeat-binding factor 1 (439 aa).

Residues 1 to 36 form a disordered region; the sequence is MAEDVSSAAPSPRGCADGRDADPTEEQMAETERNDE. An N-acetylalanine modification is found at Ala2. Ser11 carries the phosphoserine modification. Residues 23 to 36 are compositionally biased toward acidic residues; it reads PTEEQMAETERNDE. The tract at residues 58-268 is TRFH mediates dimerization; sequence EEEEEDAGLV…AAAKVVESKR (211 aa). Lys213 participates in a covalent cross-link: Glycyl lysine isopeptide (Lys-Gly) (interchain with G-Cter in SUMO2). Ser219 bears the Phosphoserine; by ATM mark. The interaction with RLIM stretch occupies residues 265 to 378; sequence ESKRTRTITS…PVTPEKHRAR (114 aa). The tract at residues 266–311 is disordered; the sequence is SKRTRTITSQDKPSGNDVEMETEANLDTRKSVSDKQSAVTESSEGT. Over residues 299–311 the composition is skewed to polar residues; it reads DKQSAVTESSEGT. A Glycyl lysine isopeptide (Lys-Gly) (interchain with G-Cter in SUMO2) cross-link involves residue Lys325. Residues 326–375 are disordered; it reads LQHGTQQQDLNKKERRVGTPQSTKKKKESRRATESRIPVSKSQPVTPEKH. The Nuclear localization signal motif lies at 337–356; it reads KKERRVGTPQSTKKKKESRR. Residue Lys366 forms a Glycyl lysine isopeptide (Lys-Gly) (interchain with G-Cter in SUMO2) linkage. The HTH myb-type domain occupies 375 to 432; sequence HRARKRQAWLWEEDKNLRSGVRKYGEGNWSKILLHYKFNNRTSVMLKDRWRTMKKLKL. A DNA-binding region (H-T-H motif) is located at residues 403 to 428; sequence WSKILLHYKFNNRTSVMLKDRWRTMK.

As to quaternary structure, homodimer; can contain both isoforms. Found in a complex with POT1; TINF2 and TNKS1. Interacts with ATM, TINF2, TNKS1, TNKS2, PINX1, NEK2 and MAPRE1. Component of the shelterin complex (telosome) composed of TERF1, TERF2, TINF2, TERF2IP ACD and POT1. Interacts with RLIM (via N-terminus). Interacts with FBXO4. Interaction with TINF2 protects against interaction with FBXO4 and subsequent polyubiquitination and proteasomal degradation. Interacts with GNL3L; this interaction promotes homodimerization. Interacts with TIN2. Interacts with RTEL1. Interactions with GNL3L and TIN2 are mutually exclusive. Interacts with CCDC79/TERB1. Interacts with TRIOBP isoform 1; mediates TERF1 localization to the centrosome. Post-translationally, phosphorylated preferentially on Ser-219 in an ATM-dependent manner in response to ionizing DNA damage. In terms of processing, ADP-ribosylation by TNKS1 or TNKS2 diminishes its ability to bind to telomeric DNA. Ubiquitinated by RLIM/RNF12, leading to its degradation by the proteasome. Ubiquitinated by a SCF (SKP1-CUL1-F-box protein) ubiquitin-protein ligase complex, leading to its degradation by the proteasome. As to expression, highly expressed and ubiquitous. Isoform Pin2 predominates.

It localises to the nucleus. It is found in the cytoplasm. The protein localises to the cytoskeleton. The protein resides in the spindle. Its subcellular location is the chromosome. It localises to the telomere. Functionally, binds the telomeric double-stranded 5'-TTAGGG-3' repeat and negatively regulates telomere length. Involved in the regulation of the mitotic spindle. Component of the shelterin complex (telosome) that is involved in the regulation of telomere length and protection. Shelterin associates with arrays of double-stranded 5'-TTAGGG-3' repeats added by telomerase and protects chromosome ends; without its protective activity, telomeres are no longer hidden from the DNA damage surveillance and chromosome ends are inappropriately processed by DNA repair pathways. The protein is Telomeric repeat-binding factor 1 (TERF1) of Homo sapiens (Human).